The chain runs to 359 residues: Phosphoserine aminotransferase (359 aa).

An L-glutamate-binding site is contributed by arginine 42. Residues 76–77 (AS), tryptophan 102, threonine 151, aspartate 170, and glutamine 193 each bind pyridoxal 5'-phosphate. N6-(pyridoxal phosphate)lysine is present on lysine 194. 235-236 (NT) is a binding site for pyridoxal 5'-phosphate.

The protein belongs to the class-V pyridoxal-phosphate-dependent aminotransferase family. SerC subfamily. Homodimer. The cofactor is pyridoxal 5'-phosphate.

The protein resides in the cytoplasm. It catalyses the reaction O-phospho-L-serine + 2-oxoglutarate = 3-phosphooxypyruvate + L-glutamate. The catalysed reaction is 4-(phosphooxy)-L-threonine + 2-oxoglutarate = (R)-3-hydroxy-2-oxo-4-phosphooxybutanoate + L-glutamate. Its pathway is amino-acid biosynthesis; L-serine biosynthesis; L-serine from 3-phospho-D-glycerate: step 2/3. The protein operates within cofactor biosynthesis; pyridoxine 5'-phosphate biosynthesis; pyridoxine 5'-phosphate from D-erythrose 4-phosphate: step 3/5. Functionally, catalyzes the reversible conversion of 3-phosphohydroxypyruvate to phosphoserine and of 3-hydroxy-2-oxo-4-phosphonooxybutanoate to phosphohydroxythreonine. The protein is Phosphoserine aminotransferase (serC) of Bacillus subtilis (strain 168).